The sequence spans 215 residues: Putative O-methyltransferase MAB_1361c (215 aa).

S-adenosyl-L-methionine contacts are provided by residues Val42, Glu64, Gly66–Thr67, Ser72, Asp90, and Val91. A substrate-binding site is contributed by Asp138.

This sequence belongs to the class I-like SAM-binding methyltransferase superfamily. Cation-dependent O-methyltransferase family.

This is Putative O-methyltransferase MAB_1361c from Mycobacteroides abscessus (strain ATCC 19977 / DSM 44196 / CCUG 20993 / CIP 104536 / JCM 13569 / NCTC 13031 / TMC 1543 / L948) (Mycobacterium abscessus).